A 225-amino-acid polypeptide reads, in one-letter code: Lipoarabinomannan carrier protein LprG (225 aa).

An N-terminal signal peptide occupies residues 1–21 (MRNRIRLALIPVAVAAIALAG). Cysteine 22 carries N-palmitoyl cysteine lipidation. The S-diacylglycerol cysteine moiety is linked to residue cysteine 22.

This sequence belongs to the LppX/LprAFG lipoprotein family. Post-translationally, modified by Lgt on Cys-22 with an S-linked diacylglyceral, signal peptide is removed by LspA, Cys-22 is further modifed with a fatty acid on its amino group by Lnt yielding a triacylated protein.

It localises to the cell inner membrane. In terms of biological role, helps membrane protein MAB_2807 (P55) transport triacylglycerides (TAG) across the inner cell membrane into the periplasm and probably ultimately to the outer membrane. Binds TAG in its hydrophobic cavity and transfers it between lipid bilayers. TAG probably regulates lipid metabolism and growth regulation and plays a structural role in the outer membrane. Also binds mannosides, lipoarabinomannan and lipomannan and various glycolipids in the same cavity. This is Lipoarabinomannan carrier protein LprG from Mycobacteroides abscessus (strain ATCC 19977 / DSM 44196 / CCUG 20993 / CIP 104536 / JCM 13569 / NCTC 13031 / TMC 1543 / L948) (Mycobacterium abscessus).